An 872-amino-acid polypeptide reads, in one-letter code: uncharacterized protein (872 aa).

The stretch at 496–524 (LQQHHQDISAMQQQILEEKNQLRRATIDV) forms a coiled coil. 2 disordered regions span residues 595 to 736 (RPAV…SVQQ) and 844 to 872 (TKENISVNPRDASKAPKSRFQRTKPPQAV). Composition is skewed to polar residues over residues 615–659 (QNGN…QTTF) and 670–686 (PYASRATSNGLSPNNVV). Over residues 687–736 (QQYQSYYDNPSNQQSNQQSNQQSNQQPNQQPNQQPNQQPNQQPNQQSVQQ) the composition is skewed to low complexity.

Its subcellular location is the virion. This is an uncharacterized protein from Acanthamoeba polyphaga mimivirus (APMV).